Reading from the N-terminus, the 119-residue chain is Ribosome-binding factor A (119 aa).

It belongs to the RbfA family. As to quaternary structure, monomer. Binds 30S ribosomal subunits, but not 50S ribosomal subunits or 70S ribosomes.

The protein resides in the cytoplasm. One of several proteins that assist in the late maturation steps of the functional core of the 30S ribosomal subunit. Associates with free 30S ribosomal subunits (but not with 30S subunits that are part of 70S ribosomes or polysomes). Required for efficient processing of 16S rRNA. May interact with the 5'-terminal helix region of 16S rRNA. The protein is Ribosome-binding factor A of Coxiella burnetii (strain CbuG_Q212) (Coxiella burnetii (strain Q212)).